The primary structure comprises 436 residues: MIMKFVEKYFEFEKYGTNLKVETLAGITTFMTMAYIIFVNPQILSTAGMDFGAVMVATCIASAIATLVMGLYARYPFALAPGMGLNAYFTYGVCLGMGIDWRVALGAVFISGVLFIILTLTKIRTWIFNVIPNAIKYGTAVGIGLFIAFIGLKSAGIIVSSKATLVTLGNLMEPSTLLALFGIFLTSILVSRNVIGAILIGIIVTSLIGMILGISPFPEGIFSMPPSIAPTFLQLDIMGALNLGLLTIVLAFFFVDMFDTLGTLSALASQAGYLDKDGKLPRVEKALMADATGTVVGSLLGTSTVTTYIESASGIALGGRTGFVSVVVAMLFLLSLFFYPVVKAIPPYATAAALVIVGALMMRSVKYIDFDDYTEAIPAFITLLTIPLTFSIATGLALGFITYPILKVFTGRWKEVHWLVYVLAVIFALRFVYLSG.

The next 12 helical transmembrane spans lie at 24–44, 51–71, 79–99, 103–123, 139–159, 171–191, 194–214, 235–255, 322–342, 345–365, 381–401, and 416–436; these read LAGI…PQIL, FGAV…VMGL, LAPG…GMGI, VALG…LTKI, TAVG…GIIV, LMEP…ILVS, VIGA…ILGI, LDIM…FFFV, GFVS…YPVV, IPPY…MRSV, ITLL…LGFI, and VHWL…YLSG.

Belongs to the nucleobase:cation symporter-2 (NCS2) (TC 2.A.40) family. Azg-like subfamily.

It is found in the cell membrane. In Methanocaldococcus jannaschii (strain ATCC 43067 / DSM 2661 / JAL-1 / JCM 10045 / NBRC 100440) (Methanococcus jannaschii), this protein is Putative permease MJ0326.